The following is a 339-amino-acid chain: Protein RecA (339 aa).

74–81 (GPESSGKT) contacts ATP.

The protein belongs to the RecA family.

It is found in the cytoplasm. Functionally, can catalyze the hydrolysis of ATP in the presence of single-stranded DNA, the ATP-dependent uptake of single-stranded DNA by duplex DNA, and the ATP-dependent hybridization of homologous single-stranded DNAs. It interacts with LexA causing its activation and leading to its autocatalytic cleavage. This Phytoplasma mali (strain AT) protein is Protein RecA.